A 413-amino-acid chain; its full sequence is Aminopeptidase PepS (413 aa).

Residues glutamate 253, glutamate 319, glutamate 343, histidine 348, histidine 381, and aspartate 383 each contribute to the a divalent metal cation site.

Belongs to the peptidase M29 family. In terms of assembly, monomer. It depends on Co(2+) as a cofactor. Requires Zn(2+) as cofactor. The cofactor is Mg(2+).

Its function is as follows. Exhibits a high specificity towards peptides possessing arginine or aromatic amino acids at the N-terminus. Could be involved both in bacterial growth by supplying amino acids. The protein is Aminopeptidase PepS (pepS) of Streptococcus thermophilus.